Reading from the N-terminus, the 256-residue chain is 5'-nucleotidase SurE (256 aa).

4 residues coordinate a divalent metal cation: D13, D14, S44, and N101.

This sequence belongs to the SurE nucleotidase family. It depends on a divalent metal cation as a cofactor.

The protein resides in the cytoplasm. It catalyses the reaction a ribonucleoside 5'-phosphate + H2O = a ribonucleoside + phosphate. Nucleotidase that shows phosphatase activity on nucleoside 5'-monophosphates. The polypeptide is 5'-nucleotidase SurE (Porphyromonas gingivalis (strain ATCC 33277 / DSM 20709 / CIP 103683 / JCM 12257 / NCTC 11834 / 2561)).